A 422-amino-acid chain; its full sequence is Dipeptidase aclJ (422 aa).

Residues Leu-28 to Leu-45 form a helical membrane-spanning segment. Zn(2+)-binding residues include His-77 and Asp-79. Asn-96 carries an N-linked (GlcNAc...) asparagine glycan. A disulfide bond links Cys-128 and Cys-219. Residue Glu-190 participates in Zn(2+) binding. Residue His-217 coordinates substrate. The N-linked (GlcNAc...) asparagine glycan is linked to Asn-270. Cys-287 and Cys-319 are oxidised to a cystine. Residues Arg-291 and Asp-351 each contribute to the substrate site.

The protein belongs to the metallo-dependent hydrolases superfamily. Peptidase M19 family. Zn(2+) serves as cofactor.

It localises to the membrane. It carries out the reaction an L-aminoacyl-L-amino acid + H2O = 2 an L-alpha-amino acid. It functions in the pathway mycotoxin biosynthesis. In terms of biological role, dipeptidase; part of the gene cluster that mediates the biosynthesis of aspirochlorine (or antibiotic A30641), an unusual halogenated spiro compound with distinctive antifungal properties due to selective inhibition of protein biosynthesis, and which is also active against bacteria, viruses, and murine tumor cells. The non-ribosomal peptide synthetase (NRPS) aclP is responsible the formation of the diketopiperazine (DKP) core from the condensation of 2 phenylalanine residues. One Phe residue is tailored into chlorotyrosine by hydroxylation and chlorination, whereas the second Phe undergoes an unprecedented C-C bond cleavage to be converted into glycine. After formation of the DKP, sulfur is incorporated into the DKP by conjugation with glutathione by aclG, followed by its stepwise degradation to the thiol by aclI, aclJ and aclK, and the dithiol oxidation by aclT. In addition, oxygenases (aclB, aclC, aclL and aclO) and O-methyltransferases (aclM and aclU) act as tailoring enzymes to produce the intermediate dechloroaspirochlorine. Ultimately, chlorination of dechloroaspirochlorine by the halogenase aclH is the last step in the aspirochlorine pathway. In Aspergillus oryzae (strain ATCC 42149 / RIB 40) (Yellow koji mold), this protein is Dipeptidase aclJ.